The sequence spans 61 residues: Large ribosomal subunit protein bL28 (61 aa).

This sequence belongs to the bacterial ribosomal protein bL28 family.

This Lactobacillus johnsonii (strain CNCM I-12250 / La1 / NCC 533) protein is Large ribosomal subunit protein bL28.